Reading from the N-terminus, the 454-residue chain is Allantoinase (454 aa).

Zn(2+)-binding residues include histidine 58, histidine 60, lysine 149, histidine 189, histidine 245, and aspartate 318. At lysine 149 the chain carries N6-carboxylysine.

The protein belongs to the metallo-dependent hydrolases superfamily. Allantoinase family. As to quaternary structure, homotetramer. Zn(2+) serves as cofactor. Carboxylation allows a single lysine to coordinate two zinc ions.

It carries out the reaction (S)-allantoin + H2O = allantoate + H(+). It functions in the pathway nitrogen metabolism; (S)-allantoin degradation; allantoate from (S)-allantoin: step 1/1. Its function is as follows. Catalyzes the conversion of allantoin (5-ureidohydantoin) to allantoic acid by hydrolytic cleavage of the five-member hydantoin ring. This Enterococcus faecalis (strain ATCC 700802 / V583) protein is Allantoinase.